Consider the following 183-residue polypeptide: MNREQIAEALRQNQVVAYPTEAVFGLGCNPQSESAVKKLLDLKQRPVEKGLILVAPSLDFFRPFVDFEQINDEQLSHLQGKYERPTTWIVPAKSTTSHFLTGKFDSIAIRLCDHPSVKALCELTGFALTSTSANLTGEPPCRTADEVRLQFGADFPVLDEIVGDARNPSEIRDLRTNQLFRQG.

The YrdC-like domain maps to 1 to 183 (MNREQIAEAL…LRTNQLFRQG (183 aa)).

It belongs to the SUA5 family. TsaC subfamily.

It localises to the cytoplasm. It carries out the reaction L-threonine + hydrogencarbonate + ATP = L-threonylcarbamoyladenylate + diphosphate + H2O. Functionally, required for the formation of a threonylcarbamoyl group on adenosine at position 37 (t(6)A37) in tRNAs that read codons beginning with adenine. Catalyzes the conversion of L-threonine, HCO(3)(-)/CO(2) and ATP to give threonylcarbamoyl-AMP (TC-AMP) as the acyladenylate intermediate, with the release of diphosphate. This Haemophilus influenzae (strain 86-028NP) protein is Threonylcarbamoyl-AMP synthase.